The primary structure comprises 368 residues: H-2 class I histocompatibility antigen, K-D alpha chain (368 aa).

The signal sequence occupies residues 1–21 (MAPCTLLLLLAAALAPTQTRA). Residues 22–111 (GPHSLRYFVT…AQRYYNQSKG (90 aa)) are alpha-1. Topologically, residues 22 to 305 (GPHSLRYFVT…KLPPSTVSNT (284 aa)) are extracellular. N-linked (GlcNAc...) asparagine glycosylation is present at Asn107. The interval 112 to 203 (GSHTFQRMFG…ELGNETLLRT (92 aa)) is alpha-2. Cys122 and Cys185 are oxidised to a cystine. N-linked (GlcNAc...) asparagine glycans are attached at residues Asn197 and Asn277. Residues 204–295 (DSPKAHVTYH…GLPEPLTLRW (92 aa)) are alpha-3. Positions 206 to 294 (PKAHVTYHPR…KGLPEPLTLR (89 aa)) constitute an Ig-like C1-type domain. Residues Cys224 and Cys280 are joined by a disulfide bond. Residues 296-305 (KLPPSTVSNT) are connecting peptide. A helical transmembrane segment spans residues 306 to 328 (VIIAVLVVLGAAIVTGAVVAFVM). Residues 329–368 (KMRRNTGGKGVNYALAPGSQTSDLSLPDGKVMVHDPHSLA) are Cytoplasmic-facing. Residues Ser350 and Ser353 each carry the phosphoserine modification.

It belongs to the MHC class I family. In terms of assembly, heterodimer of an alpha chain and a beta chain (beta-2-microglobulin).

It is found in the membrane. Functionally, involved in the presentation of foreign antigens to the immune system. This Mus musculus (Mouse) protein is H-2 class I histocompatibility antigen, K-D alpha chain (H2-K1).